The primary structure comprises 634 residues: DNA-directed RNA polymerase subunit gamma (634 aa).

Positions 74, 76, 89, and 92 each coordinate Zn(2+). Residues aspartate 471, aspartate 473, and aspartate 475 each coordinate Mg(2+).

Belongs to the RNA polymerase beta' chain family. RpoC1 subfamily. In terms of assembly, in cyanobacteria the RNAP catalytic core is composed of 2 alpha, 1 beta, 1 beta', 1 gamma and 1 omega subunit. When a sigma factor is associated with the core the holoenzyme is formed, which can initiate transcription. Mg(2+) serves as cofactor. Zn(2+) is required as a cofactor.

The catalysed reaction is RNA(n) + a ribonucleoside 5'-triphosphate = RNA(n+1) + diphosphate. Its function is as follows. DNA-dependent RNA polymerase catalyzes the transcription of DNA into RNA using the four ribonucleoside triphosphates as substrates. The sequence is that of DNA-directed RNA polymerase subunit gamma from Prochlorococcus marinus (strain MIT 9515).